Here is a 164-residue protein sequence, read N- to C-terminus: UPF0304 protein YfbU (164 aa).

It belongs to the UPF0304 family.

The sequence is that of UPF0304 protein YfbU from Escherichia coli O139:H28 (strain E24377A / ETEC).